The primary structure comprises 206 residues: Translation machinery-associated protein 22 (206 aa).

An SUI1 domain is found at 98–169 (VVIKREARTK…EVEKYIHSLL (72 aa)). Residues 184 to 206 (SQKKKKKPTDEANSNNNNNNNNK) form a disordered region. The segment covering 196-206 (NSNNNNNNNNK) has biased composition (low complexity).

It belongs to the DENR family. Interacts with the 40S ribosomal subunit.

The protein localises to the cytoplasm. The sequence is that of Translation machinery-associated protein 22 (TMA22) from Vanderwaltozyma polyspora (strain ATCC 22028 / DSM 70294 / BCRC 21397 / CBS 2163 / NBRC 10782 / NRRL Y-8283 / UCD 57-17) (Kluyveromyces polysporus).